A 208-amino-acid chain; its full sequence is Ribosome maturation factor RimP (208 aa).

Positions 165 to 208 (TAQPKKGQRQGKEPAKESGQKKQLAEAAPRSGSKRSERGSEKRK) are disordered. Composition is skewed to basic and acidic residues over residues 174–188 (QGKEPAKESGQKKQL) and 198–208 (KRSERGSEKRK).

Belongs to the RimP family.

It localises to the cytoplasm. Required for maturation of 30S ribosomal subunits. This chain is Ribosome maturation factor RimP, found in Sorangium cellulosum (strain So ce56) (Polyangium cellulosum (strain So ce56)).